The chain runs to 130 residues: Histone H2A type 2-B (130 aa).

Residues 1 to 22 form a disordered region; that stretch reads MSGRGKQGGKARAKAKSRSSRA. An N-acetylserine modification is found at S2. Residue S2 is modified to Phosphoserine; by RPS6KA5. At R4 the chain carries Citrulline; alternate. R4 bears the Symmetric dimethylarginine; by PRMT5; alternate mark. N6-(2-hydroxyisobutyryl)lysine; alternate occurs at positions 6 and 10. An N6-(beta-hydroxybutyryl)lysine; alternate modification is found at K6. Residues 7–19 show a composition bias toward basic residues; that stretch reads QGGKARAKAKSRS. K10 is modified (N6-lactoyllysine; alternate). N6-succinyllysine; alternate is present on K10. Residues K14 and K16 each participate in a glycyl lysine isopeptide (Lys-Gly) (interchain with G-Cter in ubiquitin) cross-link. K37 is subject to N6-(2-hydroxyisobutyryl)lysine; alternate. K37 carries the post-translational modification N6-(beta-hydroxybutyryl)lysine; alternate. N6-crotonyllysine; alternate is present on K37. An N6-(2-hydroxyisobutyryl)lysine mark is found at K75 and K76. K96 carries the post-translational modification N6-(2-hydroxyisobutyryl)lysine; alternate. At K96 the chain carries N6-succinyllysine; alternate. K96 carries the post-translational modification N6-glutaryllysine; alternate. Q105 carries the N5-methylglutamine modification. K119 carries the N6-(2-hydroxyisobutyryl)lysine; alternate modification. N6-crotonyllysine; alternate is present on residues K119 and K120. An N6-glutaryllysine; alternate mark is found at K119 and K120. An N6-(beta-hydroxybutyryl)lysine; alternate modification is found at K120. A Glycyl lysine isopeptide (Lys-Gly) (interchain with G-Cter in ubiquitin); alternate cross-link involves residue K120. T121 bears the Phosphothreonine; by DCAF1 mark.

Belongs to the histone H2A family. As to quaternary structure, the nucleosome is a histone octamer containing two molecules each of H2A, H2B, H3 and H4 assembled in one H3-H4 heterotetramer and two H2A-H2B heterodimers. The octamer wraps approximately 147 bp of DNA. Deiminated on Arg-4 in granulocytes upon calcium entry. In terms of processing, monoubiquitination of Lys-120 (H2AK119Ub) by RING1, TRIM37 and RNF2/RING2 complex gives a specific tag for epigenetic transcriptional repression and participates in X chromosome inactivation of female mammals. It is involved in the initiation of both imprinted and random X inactivation. Ubiquitinated H2A is enriched in inactive X chromosome chromatin. Ubiquitination of H2A functions downstream of methylation of 'Lys-27' of histone H3 (H3K27me). H2AK119Ub by RNF2/RING2 can also be induced by ultraviolet and may be involved in DNA repair. Following DNA double-strand breaks (DSBs), it is ubiquitinated through 'Lys-63' linkage of ubiquitin moieties by the E2 ligase UBE2N and the E3 ligases RNF8 and RNF168, leading to the recruitment of repair proteins to sites of DNA damage. Ubiquitination at Lys-14 and Lys-16 (H2AK13Ub and H2AK15Ub, respectively) in response to DNA damage is initiated by RNF168 that mediates monoubiquitination at these 2 sites, and 'Lys-63'-linked ubiquitin are then conjugated to monoubiquitin; RNF8 is able to extend 'Lys-63'-linked ubiquitin chains in vitro. Deubiquitinated by USP51 at Lys-14 and Lys-16 (H2AK13Ub and H2AK15Ub, respectively) after damaged DNA is repaired. H2AK119Ub and ionizing radiation-induced 'Lys-63'-linked ubiquitination (H2AK13Ub and H2AK15Ub) are distinct events. Post-translationally, phosphorylation on Ser-2 (H2AS1ph) is enhanced during mitosis. Phosphorylation on Ser-2 by RPS6KA5/MSK1 directly represses transcription. Acetylation of H3 inhibits Ser-2 phosphorylation by RPS6KA5/MSK1. Phosphorylation at Thr-121 (H2AT120ph) by DCAF1 is present in the regulatory region of many tumor suppresor genes and down-regulates their transcription. Symmetric dimethylation on Arg-4 by the PRDM1/PRMT5 complex may play a crucial role in the germ-cell lineage. In terms of processing, glutamine methylation at Gln-105 (H2AQ104me) by FBL is specifically dedicated to polymerase I. It is present at 35S ribosomal DNA locus and impairs binding of the FACT complex. Post-translationally, crotonylation (Kcr) is specifically present in male germ cells and marks testis-specific genes in post-meiotic cells, including X-linked genes that escape sex chromosome inactivation in haploid cells. Crotonylation marks active promoters and enhancers and confers resistance to transcriptional repressors. It is also associated with post-meiotically activated genes on autosomes. Hydroxybutyrylation of histones is induced by starvation. In terms of processing, lactylated in macrophages by EP300/P300 by using lactoyl-CoA directly derived from endogenous or exogenous lactate, leading to stimulates gene transcription.

The protein resides in the nucleus. It localises to the chromosome. Functionally, core component of nucleosome. Nucleosomes wrap and compact DNA into chromatin, limiting DNA accessibility to the cellular machineries which require DNA as a template. Histones thereby play a central role in transcription regulation, DNA repair, DNA replication and chromosomal stability. DNA accessibility is regulated via a complex set of post-translational modifications of histones, also called histone code, and nucleosome remodeling. The chain is Histone H2A type 2-B from Mus musculus (Mouse).